A 20-amino-acid chain; its full sequence is 23 kDa cell wall protein (20 aa).

It localises to the secreted. It is found in the cell wall. In Arabidopsis thaliana (Mouse-ear cress), this protein is 23 kDa cell wall protein.